Consider the following 127-residue polypeptide: uncharacterized protein (127 aa).

This is an uncharacterized protein from Schizosaccharomyces pombe (strain 972 / ATCC 24843) (Fission yeast).